The chain runs to 232 residues: Flagellar L-ring protein (232 aa).

The signal sequence occupies residues 1-15 (MKKVLFYVLPFAFFG). Cys16 carries the N-palmitoyl cysteine lipid modification. Cys16 carries S-diacylglycerol cysteine lipidation.

It belongs to the FlgH family. In terms of assembly, the basal body constitutes a major portion of the flagellar organelle and consists of four rings (L,P,S, and M) mounted on a central rod.

It is found in the cell outer membrane. The protein localises to the bacterial flagellum basal body. Its function is as follows. Assembles around the rod to form the L-ring and probably protects the motor/basal body from shearing forces during rotation. This chain is Flagellar L-ring protein, found in Campylobacter jejuni subsp. doylei (strain ATCC BAA-1458 / RM4099 / 269.97).